The sequence spans 221 residues: Tumor protein p53-inducible nuclear protein 2 (221 aa).

The LIR signature appears at 26-41 (VSEEDEVDGWLIIDLQ). Residues 41–68 (QDSYTAPPDPGASPAPAGRPPPAPSLMD) are disordered. Positions 47–64 (PPDPGASPAPAGRPPPAP) are enriched in pro residues. Ser-136 bears the Phosphoserine mark. Positions 177–210 (RQRAERHTLSAKVLQRQNRARESRSRRPKHQGSF) are disordered.

As to quaternary structure, interacts with VMP1, GABARAP, GABARAPL1, GABARAPL2, MAP1LC3A, MAP1LC3B, MAP1LC3C and THRA.

The protein localises to the cytoplasm. The protein resides in the cytosol. Its subcellular location is the nucleus. It is found in the PML body. It localises to the cytoplasmic vesicle. The protein localises to the autophagosome. In terms of biological role, dual regulator of transcription and autophagy. Positively regulates autophagy and is required for autophagosome formation and processing. May act as a scaffold protein that recruits MAP1LC3A, GABARAP and GABARAPL2 and brings them to the autophagosome membrane by interacting with VMP1 where, in cooperation with the BECN1-PI3-kinase class III complex, they trigger autophagosome development. Acts as a transcriptional activator of THRA. In Mus musculus (Mouse), this protein is Tumor protein p53-inducible nuclear protein 2 (Tp53inp2).